The sequence spans 280 residues: Undecaprenyl-diphosphatase (280 aa).

8 helical membrane-spanning segments follow: residues 2–22, 45–65, 86–106, 114–134, 147–167, 188–208, 223–243, and 255–275; these read FIIEIFISIIYGIIEGITEWL, AFMEMFNVVIQLGAILAVVVI, WQLWAKVVVAALPAAVIGLFL, FYNLVSVSVMLIVYGAAFIYL, LASLPYKTALQIGLFQILALF, SVVTEFTFYLGIPIMFGASGW, GQIFLLLVAMGVAFGVSLVVI, and FTIFGKYRIGLGGVLLVYAAI.

The protein belongs to the UppP family.

It is found in the cell membrane. The catalysed reaction is di-trans,octa-cis-undecaprenyl diphosphate + H2O = di-trans,octa-cis-undecaprenyl phosphate + phosphate + H(+). Functionally, catalyzes the dephosphorylation of undecaprenyl diphosphate (UPP). Confers resistance to bacitracin. The sequence is that of Undecaprenyl-diphosphatase from Streptococcus sanguinis (strain SK36).